The primary structure comprises 380 residues: G-protein coupled receptor (380 aa).

7 helical membrane-spanning segments follow: residues 26–46, 60–80, 97–117, 145–165, 184–204, 220–240, and 275–295; these read VISI…YLGI, LVCC…PLWV, FAGM…VIVT, VTIL…ETSI, AALG…HIIL, ILMW…SLSA, and VAML…VPLI. Residues cysteine 95 and cysteine 170 are joined by a disulfide bond. The interval 328 to 380 is disordered; the sequence is SQSKLLRGEENPNYDYSPKSVRIKPLKSPGGGDNSSLKDEGYDEESQNGFSIG.

This sequence belongs to the G-protein coupled receptor 1 family.

Its subcellular location is the host membrane. This chain is G-protein coupled receptor, found in Elephas maximus (Indian elephant).